Consider the following 225-residue polypeptide: MENVLRNDWGPLLAPEFEKEYYLTLSSFLTEEYSTHVVYPKVEDIFNALQYTSYENTKVVILGQDPYHGPNQAHGLSFSVQPGVKTPPSLLNMYKELRDEYGYEIPNNGYLVKWAEQGVLLLNTVLTVRQSEANSHKGKGWEHFTDRVIQLLNEREKPVIFILWGRHAQAKKKLITNPNHHIIESVHPSPLSARRGFFGSKPYSKVNTILANMGEREIDWEIPNL.

Residue Asp65 is the Proton acceptor of the active site.

This sequence belongs to the uracil-DNA glycosylase (UDG) superfamily. UNG family.

It localises to the cytoplasm. The enzyme catalyses Hydrolyzes single-stranded DNA or mismatched double-stranded DNA and polynucleotides, releasing free uracil.. In terms of biological role, excises uracil residues from the DNA which can arise as a result of misincorporation of dUMP residues by DNA polymerase or due to deamination of cytosine. The chain is Uracil-DNA glycosylase from Bacillus cereus (strain G9842).